We begin with the raw amino-acid sequence, 780 residues long: B3 domain-containing transcription repressor VAL2 (780 aa).

The segment at residues 286–387 is a DNA-binding region (TF-B3); it reads FEKVLSASDA…KLVMGYRKAT (102 aa). A CW-type zinc finger spans residues 515-565; the sequence is TGEQEQWVQCDACGKWRQLPVDILLPPKWSCSDNLLDPGRSSCSAPDELSP. Zn(2+) is bound by residues Cys524, Cys527, Cys545, and Cys557. Disordered stretches follow at residues 577 to 608, 669 to 695, and 743 to 780; these read EFKRRRLASSNEKLNQSQDASALNSLGNAGIT, KRNKGEAGQASQQAQSQSECRDETEVE, and NTAGEQQSSDMVSTEHGSSSAAQETEKDTTNGAHDPVN. Residues 584–603 are compositionally biased toward polar residues; the sequence is ASSNEKLNQSQDASALNSLG. The span at 674–686 shows a compositional bias: low complexity; sequence EAGQASQQAQSQS. A compositionally biased stretch (polar residues) spans 743–765; it reads NTAGEQQSSDMVSTEHGSSSAAQ.

Its subcellular location is the nucleus. In terms of biological role, transcriptional repressor of gene expression involved in embryonic pathways, such as LEC1, ABI3, and FUS3. Repressor of the sugar-inducible genes involved in the seed maturation program in seedlings. Plays an essential role in regulating the transition from seed maturation to seedling growth. Functionally redundant with VAL1/HSI2. The sequence is that of B3 domain-containing transcription repressor VAL2 (VAL2) from Arabidopsis thaliana (Mouse-ear cress).